A 346-amino-acid chain; its full sequence is Dehydrogenase orf1 (346 aa).

43 to 48 serves as a coordination point for NADP(+); the sequence is VDYATQ. Position 133–140 (133–140) interacts with substrate; sequence LAFSTAIV. NADP(+)-binding positions include 170 to 173, 193 to 196, tyrosine 211, and 251 to 252; these read ATSV, SPHN, and LN. 269-273 lines the substrate pocket; sequence APPNV. Position 336-337 (336-337) interacts with NADP(+); sequence VS.

The protein belongs to the zinc-containing alcohol dehydrogenase family.

It functions in the pathway secondary metabolite biosynthesis. Functionally, dehydrogenase; part of the gene cluster that mediates the biosynthesis of nigerpyrone and its derivatives carbonarone A and pestalamide A. The biosynthesis pathway begins with the polyketide assembly by epaA to form phenylacetyl triketide precursor from successive condensation of two malonyl-CoA, presumably with one phenylacetyl-CoA starter unit produced by the phenylacetyl-CoA ligase epaB. For the nigerpyrone biosynthesis, the reactive polyketide chain is released as an aldehyde through the R-domain. A nonenzymatic cyclization and dehydration may create nigerpyrone. For the biosynthesis of carbonarone A and pestalamide A, an extra methyl group is added through the C-methyltransferase domain. Several further steps involving the dehydrogenase orf1, the cytochrome P450 monooxygenase orf2 and the FAD-dependent monooxygenase orf3 are required to form a carbonarone A precursor which is converted to carbonarone A via cyclization. The O-acetyltransferase epaC could catalyze the transfer of 2-methylsuccinyl-CoA, a common intermediate in the ethylmalonyl-CoA pathway, to generate the final product pestalamide A. The polypeptide is Dehydrogenase orf1 (Aspergillus niger (strain ATCC MYA-4892 / CBS 513.88 / FGSC A1513)).